Here is a 691-residue protein sequence, read N- to C-terminus: Threonine--tRNA ligase (691 aa).

The segment at 1–22 (MSVPAQPAPGADGGDPRQPIRV) is disordered. The region spanning 1-73 (MSVPAQPAPG…DADAEVTPIA (73 aa)) is the TGS domain. Residues 268 to 574 (DHRKLGVELD…LTEHYAGAFP (307 aa)) are catalytic. Zn(2+)-binding residues include cysteine 373, histidine 424, and histidine 551.

The protein belongs to the class-II aminoacyl-tRNA synthetase family. As to quaternary structure, homodimer. Zn(2+) is required as a cofactor.

Its subcellular location is the cytoplasm. It carries out the reaction tRNA(Thr) + L-threonine + ATP = L-threonyl-tRNA(Thr) + AMP + diphosphate + H(+). Catalyzes the attachment of threonine to tRNA(Thr) in a two-step reaction: L-threonine is first activated by ATP to form Thr-AMP and then transferred to the acceptor end of tRNA(Thr). Also edits incorrectly charged L-seryl-tRNA(Thr). The protein is Threonine--tRNA ligase of Mycobacterium marinum (strain ATCC BAA-535 / M).